Reading from the N-terminus, the 160-residue chain is 6,7-dimethyl-8-ribityllumazine synthase (160 aa).

5-amino-6-(D-ribitylamino)uracil is bound by residues Trp-27, Ala-59–Glu-61, and Val-81–Ile-83. Gln-86–Thr-87 is a binding site for (2S)-2-hydroxy-3-oxobutyl phosphate. His-89 serves as the catalytic Proton donor. Asn-114 contributes to the 5-amino-6-(D-ribitylamino)uracil binding site. Arg-128 is a (2S)-2-hydroxy-3-oxobutyl phosphate binding site.

Belongs to the DMRL synthase family. As to quaternary structure, homopentamer.

It carries out the reaction (2S)-2-hydroxy-3-oxobutyl phosphate + 5-amino-6-(D-ribitylamino)uracil = 6,7-dimethyl-8-(1-D-ribityl)lumazine + phosphate + 2 H2O + H(+). It functions in the pathway cofactor biosynthesis; riboflavin biosynthesis; riboflavin from 2-hydroxy-3-oxobutyl phosphate and 5-amino-6-(D-ribitylamino)uracil: step 1/2. Catalyzes the formation of 6,7-dimethyl-8-ribityllumazine by condensation of 5-amino-6-(D-ribitylamino)uracil with 3,4-dihydroxy-2-butanone 4-phosphate. This is the penultimate step in the biosynthesis of riboflavin. This is 6,7-dimethyl-8-ribityllumazine synthase from Mycobacterium sp. (strain JLS).